Here is a 302-residue protein sequence, read N- to C-terminus: Nudix hydrolase 22, chloroplastic (302 aa).

A chloroplast-targeting transit peptide spans 1–25; that stretch reads MKSGASAASPTAKSFNFGSSRLLAL. One can recognise a Nudix hydrolase domain in the interval 73–229; that stretch reads PKKAAVLICL…DSDYVIWGLT (157 aa). The Nudix box signature appears at 114 to 135; the sequence is KAEEHDKDDGITATREAEEEIG. Mg(2+) contacts are provided by glutamate 129 and glutamate 133.

It belongs to the Nudix hydrolase family. It depends on Mg(2+) as a cofactor. Requires Mn(2+) as cofactor. Expressed in roots, leaves, stems and inflorescences.

Its subcellular location is the plastid. The protein localises to the chloroplast. Probably mediates the hydrolysis of some nucleoside diphosphate derivatives. The chain is Nudix hydrolase 22, chloroplastic (NUDT22) from Arabidopsis thaliana (Mouse-ear cress).